The primary structure comprises 312 residues: Short-chain dehydrogenase/reductase pkfC (312 aa).

NADP(+)-binding residues include K56, N108, and K140. S164 acts as the Proton donor in catalysis. Positions 193 and 197 each coordinate NADP(+). The active-site Proton acceptor is the Y193. Catalysis depends on K197, which acts as the Lowers pKa of active site Tyr.

It belongs to the short-chain dehydrogenases/reductases (SDR) family.

It participates in secondary metabolite biosynthesis. Its function is as follows. Short-chain dehydrogenase/reductase; part of the gene cluster that mediates the biosynthesis of aspernidine A, a prenylated isoindolinone. The starting point of the biosynthesis of aspernidin A is the production of orsellinaldehyde by the non-reducing polyketide synthase pkfA. Hydroxylation, methylation of one of the phenol groups, and prenylation, presumably catalyzed by the prenyltransferase pkfE, would be needed to yield aspernidine D. Subsequently, the cytochrome P450 monooxygenase pkfB is responsible for hydroxylation of aspernidine D to yield aspernidine E. The dehydrogenase pkfF may be responsible for further oxidation of aspernidine E to form a dialdehyde intermediate which is further transformed in a series of steps, some of which are enzyme-mediated, to generate aspernidine A. The possibility that additional enzymes outside of the cluster are involved in aspernidine A biosynthesis cannot be excluded. In Emericella nidulans (strain FGSC A4 / ATCC 38163 / CBS 112.46 / NRRL 194 / M139) (Aspergillus nidulans), this protein is Short-chain dehydrogenase/reductase pkfC.